A 536-amino-acid polypeptide reads, in one-letter code: Putative UDP-glucuronosyltransferase ugt-47 (536 aa).

The N-terminal stretch at 1–21 (MFRYHSILLLAILYFFEYGLA) is a signal peptide. Residues Asn-52 and Asn-308 are each glycosylated (N-linked (GlcNAc...) asparagine). Residues 497–517 (IIVPCFFVAFYFIIFPFFKLF) traverse the membrane as a helical segment.

It belongs to the UDP-glycosyltransferase family.

It is found in the membrane. It catalyses the reaction glucuronate acceptor + UDP-alpha-D-glucuronate = acceptor beta-D-glucuronoside + UDP + H(+). The chain is Putative UDP-glucuronosyltransferase ugt-47 (ugt-47) from Caenorhabditis elegans.